The chain runs to 418 residues: Equilibrative nucleotide transporter 6 (418 aa).

11 helical membrane-spanning segments follow: residues 19-39 (AMIV…SMLT), 56-76 (VLTL…AYHE), 86-106 (LIGY…DLAT), 112-132 (FGPY…DATV), 142-162 (LMCP…GALT), 186-206 (MFLA…AYVL), 264-284 (HAVN…GFLY), 291-311 (GLGA…DLVG), 326-346 (KLIT…YFTA), 353-373 (WMIM…VCIM), and 392-412 (LVIF…LWLI).

The protein belongs to the SLC29A/ENT transporter (TC 2.A.57) family. In terms of tissue distribution, expressed in leaves and siliques.

Its subcellular location is the cell membrane. Functionally, nucleoside transporter that can mediate uptake of adenosine, uridine, guanosine or cytidine when expressed in a heterologous system (yeast). The polypeptide is Equilibrative nucleotide transporter 6 (ENT6) (Arabidopsis thaliana (Mouse-ear cress)).